A 729-amino-acid polypeptide reads, in one-letter code: Fatty acid oxidation complex subunit alpha (729 aa).

The tract at residues methionine 1 to lysine 189 is enoyl-CoA hydratase/isomerase. Aspartate 296 serves as a coordination point for substrate. Residues glutamate 311 to alanine 729 are 3-hydroxyacyl-CoA dehydrogenase. Residues methionine 324, aspartate 343, valine 400–glutamate 402, lysine 407, and serine 429 contribute to the NAD(+) site. The active-site For 3-hydroxyacyl-CoA dehydrogenase activity is histidine 450. Asparagine 453 contacts NAD(+). Substrate-binding residues include asparagine 500 and tyrosine 660. A disordered region spans residues arginine 708–alanine 729.

The protein in the N-terminal section; belongs to the enoyl-CoA hydratase/isomerase family. In the C-terminal section; belongs to the 3-hydroxyacyl-CoA dehydrogenase family. As to quaternary structure, heterotetramer of two alpha chains (FadB) and two beta chains (FadA).

The enzyme catalyses a (3S)-3-hydroxyacyl-CoA + NAD(+) = a 3-oxoacyl-CoA + NADH + H(+). It carries out the reaction a (3S)-3-hydroxyacyl-CoA = a (2E)-enoyl-CoA + H2O. It catalyses the reaction a 4-saturated-(3S)-3-hydroxyacyl-CoA = a (3E)-enoyl-CoA + H2O. The catalysed reaction is (3S)-3-hydroxybutanoyl-CoA = (3R)-3-hydroxybutanoyl-CoA. The enzyme catalyses a (3Z)-enoyl-CoA = a 4-saturated (2E)-enoyl-CoA. It carries out the reaction a (3E)-enoyl-CoA = a 4-saturated (2E)-enoyl-CoA. It participates in lipid metabolism; fatty acid beta-oxidation. In terms of biological role, involved in the aerobic and anaerobic degradation of long-chain fatty acids via beta-oxidation cycle. Catalyzes the formation of 3-oxoacyl-CoA from enoyl-CoA via L-3-hydroxyacyl-CoA. It can also use D-3-hydroxyacyl-CoA and cis-3-enoyl-CoA as substrate. This chain is Fatty acid oxidation complex subunit alpha, found in Escherichia coli O8 (strain IAI1).